The chain runs to 183 residues: Peptidyl-prolyl cis-trans isomerase H (183 aa).

One can recognise a PPIase cyclophilin-type domain in the interval 19 to 182; sequence FFDVALGGEP…QDVVIIQCGE (164 aa).

The protein belongs to the cyclophilin-type PPIase family. PPIase H subfamily.

It is found in the nucleus. The enzyme catalyses [protein]-peptidylproline (omega=180) = [protein]-peptidylproline (omega=0). Its function is as follows. PPIases accelerate the folding of proteins. It catalyzes the cis-trans isomerization of proline imidic peptide bonds in oligopeptides. The sequence is that of Peptidyl-prolyl cis-trans isomerase H (cyp3) from Emericella nidulans (strain FGSC A4 / ATCC 38163 / CBS 112.46 / NRRL 194 / M139) (Aspergillus nidulans).